Reading from the N-terminus, the 412-residue chain is 8-amino-7-oxononanoate synthase (412 aa).

Residue Arg28 participates in substrate binding. 115–116 (GY) lines the pyridoxal 5'-phosphate pocket. His140 contacts substrate. The pyridoxal 5'-phosphate site is built by Ser186, His214, and Thr246. The residue at position 249 (Lys249) is an N6-(pyridoxal phosphate)lysine. Thr367 serves as a coordination point for substrate.

The protein belongs to the class-II pyridoxal-phosphate-dependent aminotransferase family. BioF subfamily. Homodimer. Pyridoxal 5'-phosphate is required as a cofactor.

It catalyses the reaction 6-carboxyhexanoyl-[ACP] + L-alanine + H(+) = (8S)-8-amino-7-oxononanoate + holo-[ACP] + CO2. It participates in cofactor biosynthesis; biotin biosynthesis. Catalyzes the decarboxylative condensation of pimeloyl-[acyl-carrier protein] and L-alanine to produce 8-amino-7-oxononanoate (AON), [acyl-carrier protein], and carbon dioxide. This is 8-amino-7-oxononanoate synthase from Paracidovorax citrulli (strain AAC00-1) (Acidovorax citrulli).